Reading from the N-terminus, the 267-residue chain is 3-methyl-2-oxobutanoate hydroxymethyltransferase (267 aa).

Residues Asp-46 and Asp-85 each contribute to the Mg(2+) site. Residues 46–47 (DS), Asp-85, and Lys-115 contribute to the 3-methyl-2-oxobutanoate site. Glu-117 provides a ligand contact to Mg(2+). The Proton acceptor role is filled by Glu-184.

This sequence belongs to the PanB family. Homodecamer; pentamer of dimers. Requires Mg(2+) as cofactor.

It is found in the cytoplasm. It catalyses the reaction 3-methyl-2-oxobutanoate + (6R)-5,10-methylene-5,6,7,8-tetrahydrofolate + H2O = 2-dehydropantoate + (6S)-5,6,7,8-tetrahydrofolate. It functions in the pathway cofactor biosynthesis; (R)-pantothenate biosynthesis; (R)-pantoate from 3-methyl-2-oxobutanoate: step 1/2. Catalyzes the reversible reaction in which hydroxymethyl group from 5,10-methylenetetrahydrofolate is transferred onto alpha-ketoisovalerate to form ketopantoate. This Syntrophotalea carbinolica (strain DSM 2380 / NBRC 103641 / GraBd1) (Pelobacter carbinolicus) protein is 3-methyl-2-oxobutanoate hydroxymethyltransferase.